The chain runs to 302 residues: Glycine--tRNA ligase alpha subunit (302 aa).

The protein belongs to the class-II aminoacyl-tRNA synthetase family. As to quaternary structure, tetramer of two alpha and two beta subunits.

The protein localises to the cytoplasm. It carries out the reaction tRNA(Gly) + glycine + ATP = glycyl-tRNA(Gly) + AMP + diphosphate. This Wigglesworthia glossinidia brevipalpis protein is Glycine--tRNA ligase alpha subunit.